Here is a 624-residue protein sequence, read N- to C-terminus: Prickle planar cell polarity protein 3 (624 aa).

Basic residues predominate over residues 1-12 (MFARGSRRRRSG). A disordered region spans residues 1-26 (MFARGSRRRRSGRAPPEAEDPARGQP). One can recognise a PET domain in the interval 74-182 (SDFQRHSISD…TVRIFPVTIT (109 aa)). 3 consecutive LIM zinc-binding domains span residues 184-249 (AICE…CLRP), 250-309 (RCQA…RHAE), and 310-373 (YCDG…SETT). The tract at residues 371 to 617 (ETTAPGPGRR…SHPVMPRQTR (247 aa)) is disordered. Residues 383–409 (SAGTVTTPLTTSTASFSATEGTSETAS) are compositionally biased toward low complexity. Over residues 447-458 (PEPPTESPGHPA) the composition is skewed to pro residues. A phosphoserine mark is found at Ser-475 and Ser-491. Positions 509–541 (SCHHHHHHRRRRQRHRRRGSHHHHHHPGRHGHH) are enriched in basic residues. The span at 545-564 (LGSGSDSGSCSSSPSSPSSE) shows a compositional bias: low complexity. A compositionally biased stretch (polar residues) spans 587–601 (RTTQDTSTETFNSPA).

The protein belongs to the prickle / espinas / testin family. In terms of assembly, interacts with VANGL2 via its C-terminus. The VANGL2-dependent membrane recruitment of PRICKLE3 is a prerequisite for its polarization. Interacts with WTIP. WTIP is involved in the recruitment of PRICKLE3 to the basal body. Interacts with MT-ATP8, a component of the mitochondrial complex V. As to expression, widely expressed.

It localises to the cytoplasm. Its subcellular location is the cell membrane. The protein resides in the mitochondrion. Functionally, involved in the planar cell polarity (PCP) pathway that is essential for the polarization of epithelial cells during morphogenetic processes, including gastrulation and neurulation. PCP is maintained by two molecular modules, the global and the core modules, PRICKLE3 being part of the core module. Distinct complexes of the core module segregate to opposite sides of the cell, where they interact with the opposite complex in the neighboring cell at or near the adherents junctions. Involved in the organization of the basal body. Involved in cilia growth and positioning. Required for proper assembly, stability, and function of mitochondrial membrane ATP synthase (mitochondrial complex V). The protein is Prickle planar cell polarity protein 3 of Mus musculus (Mouse).